Here is a 579-residue protein sequence, read N- to C-terminus: Moesin a (579 aa).

The 291-residue stretch at 5–295 (ISVRVTTMDA…GNHELYMRRR (291 aa)) folds into the FERM domain. The stretch at 306–448 (KAQAKEEKNH…EDEALEWQTK (143 aa)) forms a coiled coil. Disordered regions lie at residues 308-341 (QAKE…EKIE), 376-418 (EQER…EHLA), and 464-519 (KNKV…KNER). Basic and acidic residues predominate over residues 376 to 400 (EQERKRAQEEAERLERERRLAEEAK). Residues 490–501 (AEASAELTSAAA) are compositionally biased toward low complexity. Positions 502–519 (YKDRSEEERMTEAEKNER) are enriched in basic and acidic residues. Residues 517–551 (NERVQKHLLALTSELANARDETKKTQNDIIHAENV) adopt a coiled-coil conformation.

Its subcellular location is the cell membrane. The protein localises to the cell junction. Positively regulates endothelial adherens junction formation and stabilization. Is thereby required for intersegmental vessel luminal membrane formation and stabilization during tubulogenesis in the early stages of development, independent of blood flow dynamics. The chain is Moesin a from Danio rerio (Zebrafish).